The sequence spans 175 residues: MLHNDDVIAYPTESMFGLGCDPNSKKAVKKLLNLKNRSIEKGLILVASDFDQIKMYVNENILSNKQKKKIFFHWPGPFTFLLPAKPNTPYWLTGKFNTVAVRVSAHFEIIKLCNAFGQAVVSTSANISNMTPCFTSEEVFKCFGKDFPLLNGKIGNEKNPSKIINIINGKLIRYV.

A YrdC-like domain is found at M1–V175.

The protein belongs to the SUA5 family. TsaC subfamily.

It localises to the cytoplasm. The enzyme catalyses L-threonine + hydrogencarbonate + ATP = L-threonylcarbamoyladenylate + diphosphate + H2O. Functionally, required for the formation of a threonylcarbamoyl group on adenosine at position 37 (t(6)A37) in tRNAs that read codons beginning with adenine. Catalyzes the conversion of L-threonine, HCO(3)(-)/CO(2) and ATP to give threonylcarbamoyl-AMP (TC-AMP) as the acyladenylate intermediate, with the release of diphosphate. This Buchnera aphidicola subsp. Acyrthosiphon pisum (strain APS) (Acyrthosiphon pisum symbiotic bacterium) protein is Threonylcarbamoyl-AMP synthase.